The sequence spans 83 residues: Small ribosomal subunit protein eS21 (83 aa).

It belongs to the eukaryotic ribosomal protein eS21 family. As to quaternary structure, component of the 40S small ribosomal subunit.

The protein localises to the cytoplasm. Its subcellular location is the cytosol. It localises to the rough endoplasmic reticulum. Its function is as follows. Component of the small ribosomal subunit. The ribosome is a large ribonucleoprotein complex responsible for the synthesis of proteins in the cell. This Xenopus laevis (African clawed frog) protein is Small ribosomal subunit protein eS21 (rps21).